The following is a 455-amino-acid chain: Vimentin (455 aa).

The head stretch occupies residues 1-87 (MASRTNTSSY…GLADAINTEF (87 aa)). Positions 87 to 122 (FKTNRTNEKAEMQHLNDRFASYIDKVRFLEQQNKIL) form a coiled coil. The tract at residues 88–122 (KTNRTNEKAEMQHLNDRFASYIDKVRFLEQQNKIL) is coil 1A. One can recognise an IF rod domain in the interval 94–402 (EKAEMQHLND…KLLEGEESRI (309 aa)). The tract at residues 123–144 (IAELEQMRGKGSSRVGDLYQDE) is linker 1. A coiled-coil region spans residues 145–236 (MRELRRQVDQ…KLHDEELAEL (92 aa)). The segment at 145–236 (MRELRRQVDQ…KLHDEELAEL (92 aa)) is coil 1B. Residues 237–259 (QIQIQEQHVQIDMEVAKPDLTAA) are linker 12. Residues 260 to 398 (LKDVRQQYET…ATYRKLLEGE (139 aa)) are coil 2. Residues 294 to 398 (ARNNEAIRLA…ATYRKLLEGE (105 aa)) adopt a coiled-coil conformation. The tail stretch occupies residues 399–455 (ESRITTPFPNLSSLTLRETMKETRPAMDSLSKKVVIKTIETRDGHIINESSQNDDLE).

Belongs to the intermediate filament family. As to quaternary structure, homomer assembled from elementary dimers. One of the most prominent phosphoproteins in various cells of mesenchymal origin. Phosphorylation is enhanced during cell division, at which time vimentin filaments are significantly reorganized.

Its subcellular location is the cytoplasm. It localises to the cytoskeleton. The protein localises to the nucleus matrix. Its function is as follows. Vimentins are class-III intermediate filaments found in various non-epithelial cells, especially mesenchymal cells. Vimentin is attached to the nucleus, endoplasmic reticulum, and mitochondria, either laterally or terminally. The protein is Vimentin (vim) of Cyprinus carpio (Common carp).